A 362-amino-acid polypeptide reads, in one-letter code: NAD(P)H-quinone oxidoreductase subunit 1, chloroplastic (362 aa).

8 consecutive transmembrane segments (helical) span residues 29–49, 103–123, 128–148, 164–184, 202–222, 247–267, 303–323, and 335–355; these read ILPILTLLLGITIEVLVIVWL, IAVISILLSFLVIPLGYHFVL, IGVFLWIAISSIAPIGLLMAG, AAQSISYEIPLTFCVLAISLL, FFGWNIWRQPIGFLVFLISSL, YSGIKYGLFYLVSYLNLLVSS, TIGIFITLTKAYLFLFISITI, and LLNLGWKFLLPISLGNLLLTT.

This sequence belongs to the complex I subunit 1 family. NDH is composed of at least 16 different subunits, 5 of which are encoded in the nucleus.

Its subcellular location is the plastid. It is found in the chloroplast thylakoid membrane. It carries out the reaction a plastoquinone + NADH + (n+1) H(+)(in) = a plastoquinol + NAD(+) + n H(+)(out). The catalysed reaction is a plastoquinone + NADPH + (n+1) H(+)(in) = a plastoquinol + NADP(+) + n H(+)(out). In terms of biological role, NDH shuttles electrons from NAD(P)H:plastoquinone, via FMN and iron-sulfur (Fe-S) centers, to quinones in the photosynthetic chain and possibly in a chloroplast respiratory chain. The immediate electron acceptor for the enzyme in this species is believed to be plastoquinone. Couples the redox reaction to proton translocation, and thus conserves the redox energy in a proton gradient. This chain is NAD(P)H-quinone oxidoreductase subunit 1, chloroplastic, found in Agrostis stolonifera (Creeping bentgrass).